Here is a 273-residue protein sequence, read N- to C-terminus: Putative phosphoenolpyruvate synthase regulatory protein (273 aa).

153 to 160 (AVSRAGKT) contacts ADP.

Belongs to the pyruvate, phosphate/water dikinase regulatory protein family. PSRP subfamily.

It carries out the reaction [pyruvate, water dikinase] + ADP = [pyruvate, water dikinase]-phosphate + AMP + H(+). It catalyses the reaction [pyruvate, water dikinase]-phosphate + phosphate + H(+) = [pyruvate, water dikinase] + diphosphate. Its function is as follows. Bifunctional serine/threonine kinase and phosphorylase involved in the regulation of the phosphoenolpyruvate synthase (PEPS) by catalyzing its phosphorylation/dephosphorylation. In Xanthomonas oryzae pv. oryzae (strain MAFF 311018), this protein is Putative phosphoenolpyruvate synthase regulatory protein.